A 443-amino-acid chain; its full sequence is Thymidine phosphorylase (443 aa).

It belongs to the thymidine/pyrimidine-nucleoside phosphorylase family. Homodimer.

The catalysed reaction is thymidine + phosphate = 2-deoxy-alpha-D-ribose 1-phosphate + thymine. It functions in the pathway pyrimidine metabolism; dTMP biosynthesis via salvage pathway; dTMP from thymine: step 1/2. In terms of biological role, the enzymes which catalyze the reversible phosphorolysis of pyrimidine nucleosides are involved in the degradation of these compounds and in their utilization as carbon and energy sources, or in the rescue of pyrimidine bases for nucleotide synthesis. This Shewanella piezotolerans (strain WP3 / JCM 13877) protein is Thymidine phosphorylase.